Consider the following 120-residue polypeptide: FK506-binding protein 1B (120 aa).

A disordered region spans residues 1 to 24; that stretch reads MNPPQGVTKTILRPGNGRDSPHTG. The 97-residue stretch at 24-120 folds into the PPIase FKBP-type domain; sequence GDTVIIDYTG…LVLYVCSPAG (97 aa).

The protein belongs to the FKBP-type PPIase family. FKBP1 subfamily.

The enzyme catalyses [protein]-peptidylproline (omega=180) = [protein]-peptidylproline (omega=0). Its function is as follows. PPIases accelerate the folding of proteins. It catalyzes the cis-trans isomerization of proline imidic peptide bonds in oligopeptides. The polypeptide is FK506-binding protein 1B (FKBP3) (Emericella nidulans (strain FGSC A4 / ATCC 38163 / CBS 112.46 / NRRL 194 / M139) (Aspergillus nidulans)).